The primary structure comprises 150 residues: Ribonuclease HI (150 aa).

The RNase H type-1 domain occupies 1–141; the sequence is MKSINAYTDG…VDVLARGQAM (141 aa). The Mg(2+) site is built by Asp9, Glu47, Asp69, and Asp133.

The protein belongs to the RNase H family. Monomer. Mg(2+) is required as a cofactor.

It is found in the cytoplasm. The catalysed reaction is Endonucleolytic cleavage to 5'-phosphomonoester.. Its function is as follows. Endonuclease that specifically degrades the RNA of RNA-DNA hybrids. The protein is Ribonuclease HI of Xylella fastidiosa (strain 9a5c).